The primary structure comprises 361 residues: Allatostatin-A receptor (361 aa).

Topologically, residues 1–46 (MESTEDEFYTICLNLTAEDPSFGNCNYTTDFENGELLEKVVSRVVP) are extracellular. N-linked (GlcNAc...) asparagine glycosylation is found at N14 and N26. The helical transmembrane segment at 47 to 67 (IFFGFIGIVGLVGNALVVLVV) threads the bilayer. Residues 68–78 (AANPGMRSTTN) lie on the Cytoplasmic side of the membrane. The helical transmembrane segment at 79–99 (LLIINLAVADLLFVIFCVPFT) threads the bilayer. The Extracellular segment spans residues 100 to 116 (ATDYVMPRWPFGDWWCK). A disulfide bridge connects residues C115 and C196. A helical transmembrane segment spans residues 117–137 (VVQYFIVVTAHASVYTLVLMS). Residues 138-158 (LDRFMAVVHPIASMSIRTEKN) lie on the Cytoplasmic side of the membrane. Residues 159 to 179 (ALLAIACIWVVILTTAIPVGI) form a helical membrane-spanning segment. At 180–212 (CHGEREYSYFNRNHSSCVFLEERGYSKLGFQMS) the chain is on the extracellular side. N192 carries N-linked (GlcNAc...) asparagine glycosylation. Residues 213–233 (FFLSSYVIPLALISVLYMCML) form a helical membrane-spanning segment. Residues 234–259 (TRLWKSAPGGRVSAESRRGRKKVTRM) lie on the Cytoplasmic side of the membrane. The chain crosses the membrane as a helical span at residues 260 to 280 (VVVVVVVFAVCWCPIQIILLV). Residues 281–296 (KALNKYHITYFTVTAQ) are Extracellular-facing. The chain crosses the membrane as a helical span at residues 297–317 (IVSHVLAYMNSCVNPVLYAFL). Over 318-361 (SENFRVAFRKVMYCPPPYNDGFSGRPQATKTTRTGNGNSCHDIV) the chain is Cytoplasmic. Positions 341–361 (GRPQATKTTRTGNGNSCHDIV) are disordered. Residues 343-361 (PQATKTTRTGNGNSCHDIV) are compositionally biased toward polar residues.

It belongs to the G-protein coupled receptor 1 family. In terms of tissue distribution, expressed in the midgut and, to a lesser extent, in the fore- and hindgut of fifth instar larvae. Also highly expressed in the brain of fourth and fifth instar larvae.

The protein resides in the cell membrane. Acts as a receptor for A-type allatostatin neuropeptide hormones. The sequence is that of Allatostatin-A receptor from Bombyx mori (Silk moth).